The following is a 165-amino-acid chain: Sorting nexin-12 (165 aa).

The disordered stretch occupies residues 1–20 (MSDTAVADTRRLNSKPQDLT). N-acetylserine is present on Ser-2. Residue Tyr-23 is modified to Phosphotyrosine. The PX domain maps to 28–151 (NFLEIDIFNP…HMFLQEEAID (124 aa)). 4 residues coordinate a 1,2-diacyl-sn-glycero-3-phospho-(1D-myo-inositol-3-phosphate): Arg-71, Ser-73, Lys-96, and Arg-118. Ser-73 is modified (phosphoserine).

It belongs to the sorting nexin family.

The protein localises to the membrane. May be involved in several stages of intracellular trafficking. The sequence is that of Sorting nexin-12 (Snx12) from Mus musculus (Mouse).